The sequence spans 249 residues: UPF0758 protein BMEI0718 (249 aa).

The tract at residues 1–34 (MAKKKDTPGDGEFPGFSDTLQRTPKLEKPHYAGH) is disordered. A compositionally biased stretch (basic and acidic residues) spans 24 to 34 (PKLEKPHYAGH). The 123-residue stretch at 127 to 249 (VLGSWDKVIN…HASLRSLRLI (123 aa)) folds into the MPN domain. 3 residues coordinate Zn(2+): H198, H200, and D211. Residues 198-211 (HNHPSGDPTPSRAD) carry the JAMM motif motif.

It belongs to the UPF0758 family.

The sequence is that of UPF0758 protein BMEI0718 from Brucella melitensis biotype 1 (strain ATCC 23456 / CCUG 17765 / NCTC 10094 / 16M).